Here is a 102-residue protein sequence, read N- to C-terminus: Small ribosomal subunit protein uS10 (102 aa).

The protein belongs to the universal ribosomal protein uS10 family. Part of the 30S ribosomal subunit.

In terms of biological role, involved in the binding of tRNA to the ribosomes. In Macrococcus caseolyticus (strain JCSC5402) (Macrococcoides caseolyticum), this protein is Small ribosomal subunit protein uS10.